Here is a 65-residue protein sequence, read N- to C-terminus: Alpha-conotoxin Mr1.1 (65 aa).

The first 21 residues, Met-1 to Ser-21, serve as a signal peptide directing secretion. A propeptide spanning residues Phe-22–Lys-48 is cleaved from the precursor. 2 disulfides stabilise this stretch: Cys-50–Cys-56 and Cys-51–Cys-64. The segment at Ser-52–Pro-54 is ser-Xaa-Pro motif, crucial for potent interaction with nAChR. Cys-64 carries the post-translational modification Cysteine amide.

The protein belongs to the conotoxin A superfamily. In terms of tissue distribution, expressed by the venom duct.

The protein localises to the secreted. Alpha-conotoxins act on postsynaptic membranes, they bind to the nicotinic acetylcholine receptors (nAChR) and thus inhibit them. This toxin potently and reversibly inhibits alpha-9-alpha-10/CHRNA9-CHRNA10 (IC(50)=92 nM (human) and IC(50)=8.3 nM (rat)) and human alpha3-beta-2/CHRNA3-CHRNB2 nAChR (IC(50)=218.9 nM). Also moderately inhibits human alpha-3-beta-4/CHRNA3-CHRNB4 (60% inhibition at 1 uM), rat alpha-7/CHRNA7 (65% inhibition at 1 uM) and rat alpha-3-beta-2/CHRNA3-CHRNB2 nAChR (50-70% inhibition at 10 uM). In two rat pain models, this toxin shows analgesic effect. This Conus marmoreus (Marble cone) protein is Alpha-conotoxin Mr1.1.